We begin with the raw amino-acid sequence, 674 residues long: Kelch repeat and BTB domain-containing protein 6 (674 aa).

The disordered stretch occupies residues 1-28 (MQSREDAPRSRRLASPRGGKRPKKIHKP). Positions 10–27 (SRRLASPRGGKRPKKIHK) are enriched in basic residues. In terms of domain architecture, BTB spans 63–138 (CDVTIEVVTP…CYTGRVSLSE (76 aa)). Kelch repeat units lie at residues 386 to 435 (AVCI…YLNG), 436 to 484 (YIYI…VIRD), 486 to 523 (LYAL…VFNE), 524 to 564 (EIYC…IIKH), 567 to 616 (KLLL…CLSA), and 642 to 673 (TEWD…RVAP). Residues 631 to 674 (TEEEEIPSESSTEWDLGGFSEPDSESGSSSSLSDDDFWVRVAPQ) form a disordered region. Residues 668–671 (WVRV) carry the ATG8 interaction motif (AIM) motif.

In terms of assembly, core component of a BCR3 (BTB-CUL3-RBX1) E3 ubiquitin ligase complex, also named Cul3-RING ubiquitin ligase complex CUL3(KBTBD6/7), composed of CUL3, RBX1, KBTBD6 and KBTBD7. Interacts with GABARAP; the interaction is direct and is required for the ubiquitination of TIAM1. Interacts with GABARAPL1, GABARAPL2 and MAP1LC3B; the interaction is direct.

Its subcellular location is the cytoplasm. The protein localises to the nucleus. Its pathway is protein modification; protein ubiquitination. As part of the CUL3(KBTBD6/7) E3 ubiquitin ligase complex functions as a substrate adapter for the RAC1 guanine exchange factor (GEF) TIAM1, mediating its 'Lys-48' ubiquitination and proteasomal degradation. By controlling this ubiquitination, regulates RAC1 signal transduction and downstream biological processes including the organization of the cytoskeleton, cell migration and cell proliferation. Ubiquitination of TIAM1 requires the membrane-associated protein GABARAP which may restrict locally the activity of the complex. The protein is Kelch repeat and BTB domain-containing protein 6 of Homo sapiens (Human).